We begin with the raw amino-acid sequence, 568 residues long: Sphingosine-1-phosphate lyase 1 (568 aa).

Topologically, residues 1 to 41 are lumenal; the sequence is MPSTDLLTLKAFEPYLEILEVYSTKAKNYVNGHCTKYEPWQ. The helical; Signal-anchor for type III membrane protein transmembrane segment at 42-62 threads the bilayer; it reads LIAWSVVWTLLIVWGYEFVFQ. The Cytoplasmic portion of the chain corresponds to 63–568; sequence PESLWSRFKK…SQMNGSPKPH (506 aa). K353 bears the N6-(pyridoxal phosphate)lysine; alternate mark. K353 carries the post-translational modification N6-acetyllysine; alternate. 3'-nitrotyrosine is present on residues Y356 and Y366. The residue at position 564 (S564) is a Phosphoserine.

It belongs to the group II decarboxylase family. Sphingosine-1-phosphate lyase subfamily. Homodimer. Pyridoxal 5'-phosphate is required as a cofactor.

The protein localises to the endoplasmic reticulum membrane. The catalysed reaction is sphinganine 1-phosphate = hexadecanal + phosphoethanolamine. It carries out the reaction sphing-4-enine 1-phosphate = (2E)-hexadecenal + phosphoethanolamine. The protein operates within lipid metabolism; sphingolipid metabolism. Cleaves phosphorylated sphingoid bases (PSBs), such as sphingosine-1-phosphate, into fatty aldehydes and phosphoethanolamine. Elevates stress-induced ceramide production and apoptosis. Required for global lipid homeostasis in liver and cholesterol homeostasis in fibroblasts. Involved in the regulation of pro-inflammatory response and neutrophil trafficking. Modulates neuronal autophagy via phosphoethanolamine production which regulates accumulation of aggregate-prone proteins such as APP. Seems to play a role in establishing neuronal contact sites and axonal maintenance. The chain is Sphingosine-1-phosphate lyase 1 from Pongo abelii (Sumatran orangutan).